Consider the following 156-residue polypeptide: Ribosomal RNA large subunit methyltransferase H (156 aa).

Residues Leu72, Gly104, and 123 to 128 each bind S-adenosyl-L-methionine; that span reads FGAMVW.

Belongs to the RNA methyltransferase RlmH family. In terms of assembly, homodimer.

The protein localises to the cytoplasm. It catalyses the reaction pseudouridine(1915) in 23S rRNA + S-adenosyl-L-methionine = N(3)-methylpseudouridine(1915) in 23S rRNA + S-adenosyl-L-homocysteine + H(+). Its function is as follows. Specifically methylates the pseudouridine at position 1915 (m3Psi1915) in 23S rRNA. This chain is Ribosomal RNA large subunit methyltransferase H, found in Ruegeria pomeroyi (strain ATCC 700808 / DSM 15171 / DSS-3) (Silicibacter pomeroyi).